The sequence spans 197 residues: ATP-dependent Clp protease proteolytic subunit 2 (197 aa).

Ser101 acts as the Nucleophile in catalysis. His126 is a catalytic residue.

It belongs to the peptidase S14 family. In terms of assembly, fourteen ClpP subunits assemble into 2 heptameric rings which stack back to back to give a disk-like structure with a central cavity, resembling the structure of eukaryotic proteasomes.

It is found in the cytoplasm. It catalyses the reaction Hydrolysis of proteins to small peptides in the presence of ATP and magnesium. alpha-casein is the usual test substrate. In the absence of ATP, only oligopeptides shorter than five residues are hydrolyzed (such as succinyl-Leu-Tyr-|-NHMec, and Leu-Tyr-Leu-|-Tyr-Trp, in which cleavage of the -Tyr-|-Leu- and -Tyr-|-Trp bonds also occurs).. Functionally, cleaves peptides in various proteins in a process that requires ATP hydrolysis. Has a chymotrypsin-like activity. Plays a major role in the degradation of misfolded proteins. This Trichormus variabilis (strain ATCC 29413 / PCC 7937) (Anabaena variabilis) protein is ATP-dependent Clp protease proteolytic subunit 2.